A 396-amino-acid chain; its full sequence is RNA binding protein fox-1 homolog 1 (396 aa).

The segment at 1-119 (MNCEREQLRG…ESKSQPKRLH (119 aa)) is disordered. Residues 67-86 (PPTQTHSEQSADTSAQTVSG) are compositionally biased toward polar residues. Residues 87 to 98 (TATQTDDAAPTD) show a composition bias toward low complexity. Over residues 99–112 (GQPQTQPSENTESK) the composition is skewed to polar residues. The region spanning 116–192 (KRLHVSNIPF…RKIEVNNATA (77 aa)) is the RRM domain. An asymmetric dimethylarginine mark is found at Arg316 and Ala337. Arg387 bears the Omega-N-methylarginine mark.

In terms of assembly, binds to the C-terminus of ATXN2. In terms of tissue distribution, detected in brain (at protein level). Detected in heart, brain, neurons, skeletal muscle and embryo.

It localises to the nucleus. The protein localises to the cytoplasm. Its function is as follows. RNA-binding protein that regulates alternative splicing events by binding to 5'-UGCAUGU-3' elements. Prevents binding of U2AF2 to the 3'-splice site. Regulates alternative splicing of tissue-specific exons and of differentially spliced exons during erythropoiesis. The protein is RNA binding protein fox-1 homolog 1 (Rbfox1) of Mus musculus (Mouse).